Consider the following 135-residue polypeptide: HTH-type transcriptional repressor RghR (135 aa).

The HTH cro/C1-type domain occupies Leu8 to Leu63. A DNA-binding region (H-T-H motif) is located at residues Val19 to Asn38.

Its function is as follows. Represses the expression of yvaM and both rapG and rapH. Binds directly to the promoter regions of yvaM, rapG and rapH. In Bacillus subtilis (strain 168), this protein is HTH-type transcriptional repressor RghR (rghR).